The chain runs to 298 residues: Acetyl-coenzyme A carboxylase carboxyl transferase subunit beta 1 (298 aa).

The CoA carboxyltransferase N-terminal domain occupies 26-294; sequence MWVKCPSCGD…RAADVQNAPA (269 aa). Zn(2+) contacts are provided by C30, C33, C49, and C51. The segment at 30–51 adopts a C4-type zinc-finger fold; sequence CPSCGDLIYTRQFSDNLKVCKC.

This sequence belongs to the AccD/PCCB family. Acetyl-CoA carboxylase is a heterohexamer composed of biotin carboxyl carrier protein (AccB), biotin carboxylase (AccC) and two subunits each of ACCase subunit alpha (AccA) and ACCase subunit beta (AccD). Zn(2+) serves as cofactor.

It is found in the cytoplasm. It carries out the reaction N(6)-carboxybiotinyl-L-lysyl-[protein] + acetyl-CoA = N(6)-biotinyl-L-lysyl-[protein] + malonyl-CoA. Its pathway is lipid metabolism; malonyl-CoA biosynthesis; malonyl-CoA from acetyl-CoA: step 1/1. Its function is as follows. Component of the acetyl coenzyme A carboxylase (ACC) complex. Biotin carboxylase (BC) catalyzes the carboxylation of biotin on its carrier protein (BCCP) and then the CO(2) group is transferred by the transcarboxylase to acetyl-CoA to form malonyl-CoA. The protein is Acetyl-coenzyme A carboxylase carboxyl transferase subunit beta 1 of Roseiflexus castenholzii (strain DSM 13941 / HLO8).